Reading from the N-terminus, the 232-residue chain is 5'-methylthioadenosine/S-adenosylhomocysteine nucleosidase (232 aa).

Glu12 serves as the catalytic Proton acceptor. Substrate-binding positions include Gly78, Ile152, and Met173 to Glu174. Asp197 (proton donor) is an active-site residue.

The protein belongs to the PNP/UDP phosphorylase family. MtnN subfamily. As to quaternary structure, homodimer.

The catalysed reaction is S-adenosyl-L-homocysteine + H2O = S-(5-deoxy-D-ribos-5-yl)-L-homocysteine + adenine. It catalyses the reaction S-methyl-5'-thioadenosine + H2O = 5-(methylsulfanyl)-D-ribose + adenine. The enzyme catalyses 5'-deoxyadenosine + H2O = 5-deoxy-D-ribose + adenine. Its pathway is amino-acid biosynthesis; L-methionine biosynthesis via salvage pathway; S-methyl-5-thio-alpha-D-ribose 1-phosphate from S-methyl-5'-thioadenosine (hydrolase route): step 1/2. Catalyzes the irreversible cleavage of the glycosidic bond in both 5'-methylthioadenosine (MTA) and S-adenosylhomocysteine (SAH/AdoHcy) to adenine and the corresponding thioribose, 5'-methylthioribose and S-ribosylhomocysteine, respectively. Also cleaves 5'-deoxyadenosine, a toxic by-product of radical S-adenosylmethionine (SAM) enzymes, into 5-deoxyribose and adenine. Thus, is required for in vivo function of the radical SAM enzymes biotin synthase and lipoic acid synthase, that are inhibited by 5'-deoxyadenosine accumulation. In Salmonella choleraesuis (strain SC-B67), this protein is 5'-methylthioadenosine/S-adenosylhomocysteine nucleosidase.